A 97-amino-acid chain; its full sequence is Glutamyl-tRNA(Gln) amidotransferase subunit C 2 (97 aa).

This sequence belongs to the GatC family. In terms of assembly, heterotrimer of A, B and C subunits.

The enzyme catalyses L-glutamyl-tRNA(Gln) + L-glutamine + ATP + H2O = L-glutaminyl-tRNA(Gln) + L-glutamate + ADP + phosphate + H(+). The catalysed reaction is L-aspartyl-tRNA(Asn) + L-glutamine + ATP + H2O = L-asparaginyl-tRNA(Asn) + L-glutamate + ADP + phosphate + 2 H(+). Functionally, allows the formation of correctly charged Asn-tRNA(Asn) or Gln-tRNA(Gln) through the transamidation of misacylated Asp-tRNA(Asn) or Glu-tRNA(Gln) in organisms which lack either or both of asparaginyl-tRNA or glutaminyl-tRNA synthetases. The reaction takes place in the presence of glutamine and ATP through an activated phospho-Asp-tRNA(Asn) or phospho-Glu-tRNA(Gln). The chain is Glutamyl-tRNA(Gln) amidotransferase subunit C 2 (gatC2) from Clostridium acetobutylicum (strain ATCC 824 / DSM 792 / JCM 1419 / IAM 19013 / LMG 5710 / NBRC 13948 / NRRL B-527 / VKM B-1787 / 2291 / W).